A 203-amino-acid chain; its full sequence is Outer-membrane lipoprotein carrier protein (203 aa).

Positions 1 to 21 (MKKLAITCALLSGMVVSQVWA) are cleaved as a signal peptide.

Belongs to the LolA family. In terms of assembly, monomer.

It localises to the periplasm. In terms of biological role, participates in the translocation of lipoproteins from the inner membrane to the outer membrane. Only forms a complex with a lipoprotein if the residue after the N-terminal Cys is not an aspartate (The Asp acts as a targeting signal to indicate that the lipoprotein should stay in the inner membrane). This Klebsiella pneumoniae subsp. pneumoniae (strain ATCC 700721 / MGH 78578) protein is Outer-membrane lipoprotein carrier protein.